The following is a 114-amino-acid chain: uncharacterized protein (114 aa).

Positions 13 to 99 constitute an ABM domain; that stretch reads YYAVIFSSVK…VWYESYAVRV (87 aa).

This is an uncharacterized protein from Bacillus subtilis (strain 168).